The sequence spans 114 residues: DNA-binding protein Mbur_0117 (114 aa).

The tract at residues Glu-14–Ala-37 is disordered. The segment covering Gln-16–Ala-35 has biased composition (low complexity).

The protein belongs to the PDCD5 family.

The protein is DNA-binding protein Mbur_0117 of Methanococcoides burtonii (strain DSM 6242 / NBRC 107633 / OCM 468 / ACE-M).